The following is a 76-amino-acid chain: RNA-binding protein KhpA (76 aa).

Residues 30-76 form the KH domain; it reads GEVLEVRVNPEDLGRVIGRSGRTAKALRTLVTALADGRRVRVDVVDD.

Belongs to the KhpA RNA-binding protein family.

It localises to the cytoplasm. In terms of biological role, a probable RNA-binding protein. This Leifsonia xyli subsp. xyli (strain CTCB07) protein is RNA-binding protein KhpA.